Here is a 617-residue protein sequence, read N- to C-terminus: Electron transfer flavoprotein-ubiquinone oxidoreductase, mitochondrial (617 aa).

Residues 1-33 (MMVPLAKLASPAYQCFHALKIKKNYLPLCATRW) constitute a mitochondrion transit peptide. Residue 75-80 (GAGPAG) coordinates FAD. Lys96 bears the N6-acetyllysine mark. An intramembrane segment occupies 109–130 (IGAHTLSGACLDPRAFEELFPD). 2 positions are modified to N6-acetyllysine: Lys132 and Lys223. A ubiquinone-binding residues include Gly305 and Gly306. Residue Lys357 is modified to N6-acetyllysine. Residues 428–447 (IGLHVTEYEDNLKNSWVWKE) lie within the membrane without spanning it. A Phosphoserine modification is found at Ser551. The [4Fe-4S] cluster site is built by Cys561, Cys586, Cys589, and Cys592. Residues 577-606 (FRLQINAQNCVHCKTCDIKDPSQNINWVVP) form the 4Fe-4S ferredoxin-type domain.

As to quaternary structure, monomer. The cofactor is [4Fe-4S] cluster. FAD serves as cofactor.

The protein localises to the mitochondrion inner membrane. The catalysed reaction is a ubiquinone + reduced [electron-transfer flavoprotein] = a ubiquinol + oxidized [electron-transfer flavoprotein] + H(+). Functionally, accepts electrons from ETF and reduces ubiquinone. In Sus scrofa (Pig), this protein is Electron transfer flavoprotein-ubiquinone oxidoreductase, mitochondrial (ETFDH).